A 227-amino-acid chain; its full sequence is Cytochrome c oxidase subunit 2 (227 aa).

At 1–14 the chain is on the mitochondrial intermembrane side; it reads MAYPFELGFQDATS. A helical transmembrane segment spans residues 15 to 45; that stretch reads PIMEELLHFHDHTLMIVFLISSLVLYIISLM. The Mitochondrial matrix portion of the chain corresponds to 46 to 59; that stretch reads LTTKLTHTSTMDAQ. A helical transmembrane segment spans residues 60 to 87; it reads EVETIWTILPAIILILIALPSLRILYMM. Residues 88–227 are Mitochondrial intermembrane-facing; the sequence is DEINDPSLTV…HFENWSSSML (140 aa). Cu cation is bound by residues His161, Cys196, Glu198, Cys200, His204, and Met207. Residue Glu198 coordinates Mg(2+).

The protein belongs to the cytochrome c oxidase subunit 2 family. Component of the cytochrome c oxidase (complex IV, CIV), a multisubunit enzyme composed of 14 subunits. The complex is composed of a catalytic core of 3 subunits MT-CO1, MT-CO2 and MT-CO3, encoded in the mitochondrial DNA, and 11 supernumerary subunits COX4I, COX5A, COX5B, COX6A, COX6B, COX6C, COX7A, COX7B, COX7C, COX8 and NDUFA4, which are encoded in the nuclear genome. The complex exists as a monomer or a dimer and forms supercomplexes (SCs) in the inner mitochondrial membrane with NADH-ubiquinone oxidoreductase (complex I, CI) and ubiquinol-cytochrome c oxidoreductase (cytochrome b-c1 complex, complex III, CIII), resulting in different assemblies (supercomplex SCI(1)III(2)IV(1) and megacomplex MCI(2)III(2)IV(2)). Found in a complex with TMEM177, COA6, COX18, COX20, SCO1 and SCO2. Interacts with TMEM177 in a COX20-dependent manner. Interacts with COX20. Interacts with COX16. Cu cation serves as cofactor.

It localises to the mitochondrion inner membrane. It carries out the reaction 4 Fe(II)-[cytochrome c] + O2 + 8 H(+)(in) = 4 Fe(III)-[cytochrome c] + 2 H2O + 4 H(+)(out). Its function is as follows. Component of the cytochrome c oxidase, the last enzyme in the mitochondrial electron transport chain which drives oxidative phosphorylation. The respiratory chain contains 3 multisubunit complexes succinate dehydrogenase (complex II, CII), ubiquinol-cytochrome c oxidoreductase (cytochrome b-c1 complex, complex III, CIII) and cytochrome c oxidase (complex IV, CIV), that cooperate to transfer electrons derived from NADH and succinate to molecular oxygen, creating an electrochemical gradient over the inner membrane that drives transmembrane transport and the ATP synthase. Cytochrome c oxidase is the component of the respiratory chain that catalyzes the reduction of oxygen to water. Electrons originating from reduced cytochrome c in the intermembrane space (IMS) are transferred via the dinuclear copper A center (CU(A)) of subunit 2 and heme A of subunit 1 to the active site in subunit 1, a binuclear center (BNC) formed by heme A3 and copper B (CU(B)). The BNC reduces molecular oxygen to 2 water molecules using 4 electrons from cytochrome c in the IMS and 4 protons from the mitochondrial matrix. This Neotamias bulleri (Buller's chipmunk) protein is Cytochrome c oxidase subunit 2 (MT-CO2).